The following is an 898-amino-acid chain: MRPMRIFLNDDRHVMAKHSVVYPTQEELEAVQNMVSHTERALKAVSDWIDQQEKDSGIEQENPEPEETETTEEGKDSEAKTGENPTRTLRGVMRVGLVAKGLLLKGDLDLELVLLCRDKPTISLLKRVADNLVLQFETVSEDKYEVVQNIREASIVIKNTKEPPLTLHIRLTSPLVREEVEKLSAGETLTVSDPPDVLDRHKCLAALASLRHAKWFQARANGLKSCVIVIRVLRDLCTRVPTWEPLRGWPLELLCEKAIGTANRPMGAGEALRRVLECLSSGILMPDGPGLYDPCEKDASDALEHLERQQREDITQSAQHALRLAAFGQLHKVLGMDPLPTKMPKKTKIEIPIIDYTVQIPPSTTYAMPALKRPIEEDGEDKSPSKKKKKIQKKDEKSEPPQAMNALMRLNQLKPGLQYKLISQTGPVHAPIFTMSVEVDDKTFEASGPSKKTAKLHVAVKVLQDMGLPTGIDEKEESVDESEEKPVLQTPSQTADSEQADSSAGDQSESGKQQGPILTRHGKNPVMELNEKRRGLKYELISETGGSHDKRFIMEVEVDGVKFQGNGSNKKVAKAYAALSALEKLFPDYTTYTEAPKKKRPPMMPRGGPKFAGKHNQGFGMMYNEVPPPQVMRGRGRGGMNRGRGRGRGGFGGGNYGGYMNSGGYGGGYGGNNYQTSATAGYSQFYSNGGASGNAGGGGAGSGGYSSYYQGEGYNAPTPPKPFVKKPPPPQQQQQPPPQHASNPPKPSYNQGYQGHQGGQQQQQPQQQQQQTYNQNQYSNYGPPQKQKGGYNQGTQGAASAGSYNYSNSYTGGTACRVRQWRGCRRARRPALTQRQALVTTQGRTPAMVQPAVPHRTKVTHSRTTIKVPPDRTTAALQIITSPLREEQEVMAGIQITT.

The region spanning 5 to 379 (RIFLNDDRHV…ALKRPIEEDG (375 aa)) is the DZF domain. Disordered stretches follow at residues 52-87 (QEKD…NPTR), 374-403 (PIEE…PPQA), 468-529 (LPTG…VMEL), 627-651 (PPPQ…RGGF), and 711-799 (GEGY…QGAA). Residues 61–71 (ENPEPEETETT) show a composition bias toward acidic residues. Composition is skewed to basic and acidic residues over residues 72–81 (EEGKDSEAKT) and 374–384 (PIEEDGEDKSP). The short motif at 372 to 390 (KRPIEEDGEDKSPSKKKKK) is the Bipartite nuclear localization signal element. The 70-residue stretch at 399–468 (EPPQAMNALM…AVKVLQDMGL (70 aa)) folds into the DRBM 1 domain. The segment covering 474 to 483 (EKEESVDESE) has biased composition (acidic residues). Residues 489 to 513 (QTPSQTADSEQADSSAGDQSESGKQ) show a composition bias toward polar residues. Residues 521-587 (HGKNPVMELN…ALSALEKLFP (67 aa)) enclose the DRBM 2 domain. Positions 637–651 (RGGMNRGRGRGRGGF) are enriched in gly residues. Residues 717 to 747 (PTPPKPFVKKPPPPQQQQQPPPQHASNPPKP) show a composition bias toward pro residues. Over residues 749-782 (YNQGYQGHQGGQQQQQPQQQQQQTYNQNQYSNYG) the composition is skewed to low complexity.

As to quaternary structure, a component of a ybx2/frgy2-containing mRNA-ribonucleoprotein (mRNP) complex. Also a component of the CCAAT box transcription factor (CBTF) complex. In terms of processing, phosphorylated. Phosphorylation affects nuclear translocation. Post-translationally, methylated by protein arginine N-methyltransferase 1 (prmt1b) in the RGG-rich domain. Methylation decreases DNA-binding and thereby decreases transcription of the gata2 gene, but does not regulate dsRNA binding or subcellular localization.

The protein localises to the nucleus. Its subcellular location is the cytoplasm. Its function is as follows. RNA-binding protein that plays an essential role in the biogenesis of circular RNAs (circRNAs) which are produced by back-splicing circularization of pre-mRNAs. Within the nucleus, promotes circRNAs processing by stabilizing the regulatory elements residing in the flanking introns of the circularized exons. Plays thereby a role in the back-splicing of a subset of circRNAs. As a consequence, participates in a wide range of transcriptional and post-transcriptional processes. Binds to poly-U elements and AU-rich elements (AREs) in the 3'-UTR of target mRNAs. Upon viral infection, ILF3 accumulates in the cytoplasm and participates in the innate antiviral response. Mechanistically, ILF3 becomes phosphorylated and activated by the double-stranded RNA-activated protein kinase/PKR which releases ILF3 from cellular mature circRNAs. In turn, unbound ILF3 molecules are able to interact with and thus inhibit viral mRNAs. Has a cytoplasmic role early in development as part of a ribonucleoprotein (mRNP) complex which may regulate mRNA transport and/or translation. Following nuclear localization at the mid-blastula transition, acts as a transcription factor and binds the 5'-CCAAT-3' promoter sequence to regulate transcription of the gata2 gene as a subunit of the CCAAT box transcription factor (CBTF). Its role as an mRNP component negatively regulates its activity as a transcription factor by precluding its nuclear localization. The protein is Interleukin enhancer-binding factor 3-B (ilf3-b) of Xenopus laevis (African clawed frog).